The following is a 413-amino-acid chain: Chloramphenicol efflux pump Rv0191 (413 aa).

12 consecutive transmembrane segments (helical) span residues 23-43, 55-75, 89-109, 110-130, 150-170, 176-196, 226-246, 256-276, 286-306, 312-332, 353-373, and 378-398; these read LSVL…PVGA, VVLV…TTVP, LVVS…APNF, AVLA…WAVI, IYIG…AMSL, LAAV…RLAL, VLTM…VVII, NLAW…PLVA, AVIV…ALAF, AATA…ATAV, GLYV…GGLL, and LAMM…GMTV.

It belongs to the major facilitator superfamily.

The protein localises to the cell membrane. Inhibited by the drug efflux pump inhibitors verapamil, resperine, piperine, chlorpromazine and carbonyl cyanide m-chlorophenylhydrazone (CCCP). In terms of biological role, active efflux pump that plays an important role in chloramphenicol resistance. Overexpression causes pyrazinamide resistance. The protein is Chloramphenicol efflux pump Rv0191 of Mycobacterium tuberculosis (strain ATCC 25618 / H37Rv).